The sequence spans 345 residues: NADH-ubiquinone oxidoreductase chain 2 (345 aa).

The next 10 helical transmembrane spans lie at 1–21 (MNPL…ILTT), 26–46 (WVSA…IISM), 60–80 (FLIQ…NAHL), 96–115 (IALT…HFWL), 122–144 (VPIL…LLIM), 148–170 (LIPT…LGGL), 201–223 (TLLN…HLTM), 242–262 (SLFL…GFIP), 274–294 (NLTP…MFYL), and 323–343 (TSTL…TPTL).

Belongs to the complex I subunit 2 family.

The protein localises to the mitochondrion inner membrane. The enzyme catalyses a ubiquinone + NADH + 5 H(+)(in) = a ubiquinol + NAD(+) + 4 H(+)(out). In terms of biological role, core subunit of the mitochondrial membrane respiratory chain NADH dehydrogenase (Complex I) that is believed to belong to the minimal assembly required for catalysis. Complex I functions in the transfer of electrons from NADH to the respiratory chain. The immediate electron acceptor for the enzyme is believed to be ubiquinone. The protein is NADH-ubiquinone oxidoreductase chain 2 (MT-ND2) of Varanus nebulosus (Clouded monitor).